The following is a 197-amino-acid chain: Nucleoid occlusion factor SlmA (197 aa).

The 61-residue stretch at 7–67 (INRREHILQC…GLIEFIEESL (61 aa)) folds into the HTH tetR-type domain. A DNA-binding region (H-T-H motif) is located at residues 30-49 (TTAKLASEVGVSEAALYRHF).

This sequence belongs to the nucleoid occlusion factor SlmA family. Homodimer. Interacts with FtsZ.

It is found in the cytoplasm. The protein resides in the nucleoid. Its function is as follows. Required for nucleoid occlusion (NO) phenomenon, which prevents Z-ring formation and cell division over the nucleoid. Acts as a DNA-associated cell division inhibitor that binds simultaneously chromosomal DNA and FtsZ, and disrupts the assembly of FtsZ polymers. SlmA-DNA-binding sequences (SBS) are dispersed on non-Ter regions of the chromosome, preventing FtsZ polymerization at these regions. In Shewanella sp. (strain MR-7), this protein is Nucleoid occlusion factor SlmA.